Consider the following 400-residue polypeptide: CinA-like protein (400 aa).

Belongs to the CinA family.

In Shigella flexneri, this protein is CinA-like protein.